A 597-amino-acid chain; its full sequence is Elongation factor 4 (597 aa).

One can recognise a tr-type G domain in the interval 2–184 (KNIRNFSIIA…EVVNKIPPPK (183 aa)). Residues 14–19 (DHGKST) and 131–134 (NKID) contribute to the GTP site.

The protein belongs to the TRAFAC class translation factor GTPase superfamily. Classic translation factor GTPase family. LepA subfamily.

The protein localises to the cell inner membrane. It carries out the reaction GTP + H2O = GDP + phosphate + H(+). Required for accurate and efficient protein synthesis under certain stress conditions. May act as a fidelity factor of the translation reaction, by catalyzing a one-codon backward translocation of tRNAs on improperly translocated ribosomes. Back-translocation proceeds from a post-translocation (POST) complex to a pre-translocation (PRE) complex, thus giving elongation factor G a second chance to translocate the tRNAs correctly. Binds to ribosomes in a GTP-dependent manner. The chain is Elongation factor 4 from Chromobacterium violaceum (strain ATCC 12472 / DSM 30191 / JCM 1249 / CCUG 213 / NBRC 12614 / NCIMB 9131 / NCTC 9757 / MK).